A 390-amino-acid polypeptide reads, in one-letter code: Peroxisomal sarcosine oxidase (390 aa).

9–39 contacts FAD; the sequence is DAIVIGAGIQGCFTAYHLAKHRKRILLLEQF. Residue lysine 126 is modified to N6-acetyllysine. An S-8alpha-FAD cysteine modification is found at cysteine 319. The short motif at 388–390 is the Microbody targeting signal element; sequence AHL.

Belongs to the MSOX/MTOX family. It depends on FAD as a cofactor. Expressed in the liver and kidney.

Its subcellular location is the peroxisome. The enzyme catalyses sarcosine + O2 + H2O = formaldehyde + glycine + H2O2. It carries out the reaction L-pipecolate + O2 = L-1-piperideine-6-carboxylate + H2O2 + H(+). Its function is as follows. Metabolizes sarcosine and L-pipecolic acid. The chain is Peroxisomal sarcosine oxidase (PIPOX) from Homo sapiens (Human).